We begin with the raw amino-acid sequence, 861 residues long: Leucine--tRNA ligase (861 aa).

Positions 42 to 52 (PYPSGKLHMGH) match the 'HIGH' region motif. The 'KMSKS' region signature appears at 619 to 623 (KMSKS). Residue Lys622 participates in ATP binding.

This sequence belongs to the class-I aminoacyl-tRNA synthetase family.

The protein resides in the cytoplasm. It catalyses the reaction tRNA(Leu) + L-leucine + ATP = L-leucyl-tRNA(Leu) + AMP + diphosphate. This chain is Leucine--tRNA ligase, found in Actinobacillus pleuropneumoniae serotype 5b (strain L20).